Consider the following 262-residue polypeptide: Acyl-[acyl-carrier-protein]--UDP-N-acetylglucosamine O-acyltransferase (262 aa).

This sequence belongs to the transferase hexapeptide repeat family. LpxA subfamily. Homotrimer.

The protein resides in the cytoplasm. The catalysed reaction is a (3R)-hydroxyacyl-[ACP] + UDP-N-acetyl-alpha-D-glucosamine = a UDP-3-O-[(3R)-3-hydroxyacyl]-N-acetyl-alpha-D-glucosamine + holo-[ACP]. Its pathway is glycolipid biosynthesis; lipid IV(A) biosynthesis; lipid IV(A) from (3R)-3-hydroxytetradecanoyl-[acyl-carrier-protein] and UDP-N-acetyl-alpha-D-glucosamine: step 1/6. Involved in the biosynthesis of lipid A, a phosphorylated glycolipid that anchors the lipopolysaccharide to the outer membrane of the cell. This is Acyl-[acyl-carrier-protein]--UDP-N-acetylglucosamine O-acyltransferase from Verminephrobacter eiseniae (strain EF01-2).